The chain runs to 46 residues: uncharacterized protein (46 aa).

Its subcellular location is the plastid. The protein resides in the chloroplast. This is an uncharacterized protein from Trieres chinensis (Marine centric diatom).